The following is a 452-amino-acid chain: UPF0210 protein Dred_1672 (452 aa).

The protein belongs to the UPF0210 family. Homodimer.

The protein is UPF0210 protein Dred_1672 of Desulforamulus reducens (strain ATCC BAA-1160 / DSM 100696 / MI-1) (Desulfotomaculum reducens).